The primary structure comprises 329 residues: Ketol-acid reductoisomerase (NADP(+)) (329 aa).

Positions 2–182 (TQLFYDTDAD…GGTRAGILET (181 aa)) constitute a KARI N-terminal Rossmann domain. NADP(+) is bound by residues 25–28 (YGSQ), S51, S53, and 83–86 (DEFQ). H108 is an active-site residue. G134 contacts NADP(+). One can recognise a KARI C-terminal knotted domain in the interval 183–328 (NFKEETETDL…KGLRSMFSWL (146 aa)). Mg(2+) contacts are provided by D191, E195, E227, and E231. S252 is a substrate binding site.

It belongs to the ketol-acid reductoisomerase family. Mg(2+) serves as cofactor.

It carries out the reaction (2R)-2,3-dihydroxy-3-methylbutanoate + NADP(+) = (2S)-2-acetolactate + NADPH + H(+). It catalyses the reaction (2R,3R)-2,3-dihydroxy-3-methylpentanoate + NADP(+) = (S)-2-ethyl-2-hydroxy-3-oxobutanoate + NADPH + H(+). It functions in the pathway amino-acid biosynthesis; L-isoleucine biosynthesis; L-isoleucine from 2-oxobutanoate: step 2/4. Its pathway is amino-acid biosynthesis; L-valine biosynthesis; L-valine from pyruvate: step 2/4. Involved in the biosynthesis of branched-chain amino acids (BCAA). Catalyzes an alkyl-migration followed by a ketol-acid reduction of (S)-2-acetolactate (S2AL) to yield (R)-2,3-dihydroxy-isovalerate. In the isomerase reaction, S2AL is rearranged via a Mg-dependent methyl migration to produce 3-hydroxy-3-methyl-2-ketobutyrate (HMKB). In the reductase reaction, this 2-ketoacid undergoes a metal-dependent reduction by NADPH to yield (R)-2,3-dihydroxy-isovalerate. This is Ketol-acid reductoisomerase (NADP(+)) from Prochlorococcus marinus (strain AS9601).